The following is a 474-amino-acid chain: Bifunctional protein HldE (474 aa).

The segment at 1–318 (MKLSMPRFDQ…RAVQREQGSE (318 aa)) is ribokinase. 194-197 (NLSE) serves as a coordination point for ATP. Aspartate 263 is an active-site residue. The cytidylyltransferase stretch occupies residues 343-474 (FTNGCFDILH…AIVEKIRQKG (132 aa)).

This sequence in the N-terminal section; belongs to the carbohydrate kinase PfkB family. It in the C-terminal section; belongs to the cytidylyltransferase family. Homodimer.

It carries out the reaction D-glycero-beta-D-manno-heptose 7-phosphate + ATP = D-glycero-beta-D-manno-heptose 1,7-bisphosphate + ADP + H(+). The enzyme catalyses D-glycero-beta-D-manno-heptose 1-phosphate + ATP + H(+) = ADP-D-glycero-beta-D-manno-heptose + diphosphate. It participates in nucleotide-sugar biosynthesis; ADP-L-glycero-beta-D-manno-heptose biosynthesis; ADP-L-glycero-beta-D-manno-heptose from D-glycero-beta-D-manno-heptose 7-phosphate: step 1/4. It functions in the pathway nucleotide-sugar biosynthesis; ADP-L-glycero-beta-D-manno-heptose biosynthesis; ADP-L-glycero-beta-D-manno-heptose from D-glycero-beta-D-manno-heptose 7-phosphate: step 3/4. Its pathway is bacterial outer membrane biogenesis; LPS core biosynthesis. Functionally, catalyzes the phosphorylation of D-glycero-D-manno-heptose 7-phosphate at the C-1 position to selectively form D-glycero-beta-D-manno-heptose-1,7-bisphosphate. Its function is as follows. Catalyzes the ADP transfer from ATP to D-glycero-beta-D-manno-heptose 1-phosphate, yielding ADP-D-glycero-beta-D-manno-heptose. This is Bifunctional protein HldE from Pseudomonas aeruginosa (strain ATCC 15692 / DSM 22644 / CIP 104116 / JCM 14847 / LMG 12228 / 1C / PRS 101 / PAO1).